Consider the following 352-residue polypeptide: Chorismate synthase (352 aa).

Arg-48 provides a ligand contact to NADP(+). Residues 125–127 (RSS), 238–239 (NA), Gly-278, 293–297 (KPTSS), and Arg-319 contribute to the FMN site.

Belongs to the chorismate synthase family. In terms of assembly, homotetramer. FMNH2 is required as a cofactor.

The enzyme catalyses 5-O-(1-carboxyvinyl)-3-phosphoshikimate = chorismate + phosphate. The protein operates within metabolic intermediate biosynthesis; chorismate biosynthesis; chorismate from D-erythrose 4-phosphate and phosphoenolpyruvate: step 7/7. In terms of biological role, catalyzes the anti-1,4-elimination of the C-3 phosphate and the C-6 proR hydrogen from 5-enolpyruvylshikimate-3-phosphate (EPSP) to yield chorismate, which is the branch point compound that serves as the starting substrate for the three terminal pathways of aromatic amino acid biosynthesis. This reaction introduces a second double bond into the aromatic ring system. This Legionella pneumophila subsp. pneumophila (strain Philadelphia 1 / ATCC 33152 / DSM 7513) protein is Chorismate synthase.